An 83-amino-acid polypeptide reads, in one-letter code: Putative membrane protein insertion efficiency factor (83 aa).

Residues 63–83 (GGNDPVPDHFSLRRNKTDISD) are disordered. The span at 68–83 (VPDHFSLRRNKTDISD) shows a compositional bias: basic and acidic residues.

The protein belongs to the UPF0161 family.

The protein localises to the cell membrane. In terms of biological role, could be involved in insertion of integral membrane proteins into the membrane. The chain is Putative membrane protein insertion efficiency factor from Streptococcus agalactiae serotype Ia (strain ATCC 27591 / A909 / CDC SS700).